Reading from the N-terminus, the 141-residue chain is Hemoglobin subunit alpha (141 aa).

The Globin domain occupies V1–R141. The residue at position 3 (S3) is a Phosphoserine. K7 bears the N6-succinyllysine mark. T8 bears the Phosphothreonine mark. Position 11 is an N6-succinyllysine (K11). An N6-acetyllysine; alternate modification is found at K16. K16 carries the N6-succinyllysine; alternate modification. Y24 is subject to Phosphotyrosine. S35 is subject to Phosphoserine. K40 carries the post-translational modification N6-succinyllysine. The residue at position 49 (S49) is a Phosphoserine. An O2-binding site is contributed by H58. H87 is a binding site for heme b. S102 is subject to Phosphoserine. Residue T108 is modified to Phosphothreonine. 2 positions are modified to phosphoserine: S124 and S131. T134 and T137 each carry phosphothreonine. A Phosphoserine modification is found at S138.

It belongs to the globin family. In terms of assembly, heterotetramer of two alpha chains and two beta chains. As to expression, red blood cells.

Its function is as follows. Involved in oxygen transport from the lung to the various peripheral tissues. Functionally, hemopressin acts as an antagonist peptide of the cannabinoid receptor CNR1. Hemopressin-binding efficiently blocks cannabinoid receptor CNR1 and subsequent signaling. The sequence is that of Hemoglobin subunit alpha (HBA) from Rousettus aegyptiacus (Egyptian fruit bat).